The sequence spans 211 residues: Large ribosomal subunit protein uL3 (211 aa).

The interval 135–155 is disordered; it reads THGNSLSHRAPGSIGQNQSPG. Gln152 is modified (N5-methylglutamine).

It belongs to the universal ribosomal protein uL3 family. Part of the 50S ribosomal subunit. Forms a cluster with proteins L14 and L19. Methylated by PrmB.

One of the primary rRNA binding proteins, it binds directly near the 3'-end of the 23S rRNA, where it nucleates assembly of the 50S subunit. The sequence is that of Large ribosomal subunit protein uL3 from Pseudoalteromonas translucida (strain TAC 125).